We begin with the raw amino-acid sequence, 492 residues long: Spore germination protein GerLA (492 aa).

Transmembrane regions (helical) follow at residues 295–315 (IIAVLLPAMYVALVSYHQGLI), 384–404 (FLVIIIAVTAIATFSLPVYSI), and 410–430 (ILLFVFVLAATAFGLYGIILA).

It belongs to the GerABKA family.

It localises to the membrane. In terms of biological role, contributes to the L-alanine germination response. This chain is Spore germination protein GerLA (gerLA), found in Bacillus cereus.